A 73-amino-acid chain; its full sequence is U-scoloptoxin(15)-Sa1a (73 aa).

A signal peptide spans 1–20 (MKFHIIFCLLAALMMTSAFA).

The protein belongs to the scoloptoxin-15 family. Contains 2 disulfide bonds. As to expression, expressed by the venom gland.

It localises to the secreted. This Scolopendra alternans (Florida Keys giant centipede) protein is U-scoloptoxin(15)-Sa1a.